Consider the following 267-residue polypeptide: uncharacterized protein (267 aa).

An ABC transporter domain is found at 2–198 (LGANGAGKTT…FRNKFIVIEG (197 aa)). Position 3-10 (3-10 (GANGAGKT)) interacts with ATP.

This sequence belongs to the ABC transporter superfamily.

This is an uncharacterized protein from Alkalihalophilus pseudofirmus (strain ATCC BAA-2126 / JCM 17055 / OF4) (Bacillus pseudofirmus).